The primary structure comprises 467 residues: Sodium-dependent phosphate transport protein 1 (467 aa).

N-linked (GlcNAc...) asparagine glycosylation is found at asparagine 41, asparagine 49, and asparagine 58. 10 helical membrane passes run 81 to 101, 119 to 139, 178 to 198, 200 to 220, 257 to 277, 301 to 321, 339 to 359, 365 to 385, 401 to 421, and 433 to 453; these read GIIL…VGYF, SVLS…VVVC, FLLG…SLGW, MVFY…FVLF, AILK…FFWS, GFLS…AGQL, LFTA…PYLS, IVIF…GVFI, CSTL…GLIL, and FILM…VATA.

Belongs to the major facilitator superfamily. Sodium/anion cotransporter family. In terms of assembly, interacts with PDZK1. As to expression, expressed in kidney cortex, liver and brain but not in other tissues.

Its subcellular location is the apical cell membrane. The catalysed reaction is 3 Na(+)(out) + phosphate(out) = 3 Na(+)(in) + phosphate(in). The enzyme catalyses urate(out) = urate(in). Its function is as follows. Important for the resorption of phosphate by the kidney. May be involved in actively transporting phosphate into cells via Na(+) cotransport in the renal brush border membrane. Plays a role in urate transport in the kidney. The chain is Sodium-dependent phosphate transport protein 1 (SLC17A1) from Homo sapiens (Human).